Reading from the N-terminus, the 701-residue chain is Triadin (701 aa).

Residues 1 to 28 (MTEITAEGNASTTTTVIDSKNGSVPKSP) form a disordered region. Over 1 to 47 (MTEITAEGNASTTTTVIDSKNGSVPKSPGKVLKRTVTEDIVTTFSSP) the chain is Cytoplasmic. Residues 8–24 (GNASTTTTVIDSKNGSV) are compositionally biased toward polar residues. Residues 48 to 68 (AAWLLVIALIITWSAVAVVMF) form a helical membrane-spanning segment. Residues 69–701 (DLVDYKNFSA…SSPGQKQQGQ (633 aa)) are Lumenal-facing. Asn-75 is a glycosylation site (N-linked (GlcNAc...) asparagine). Positions 117 to 130 (DGDEDDDDGDEDTD) are enriched in acidic residues. 3 disordered regions span residues 117 to 256 (DGDE…KHEQ), 273 to 654 (GDLR…TKRQ), and 676 to 701 (FPVTPAYRPGESSGQPSSPGQKQQGQ). Basic and acidic residues-rich tracts occupy residues 131–256 (KGEI…KHEQ), 303–351 (EGKE…KAPE), 365–385 (AKKDEKKEDSKKTKTPVEEHP), 391–426 (EKKEKYVEPAKSSKKEHSAPSEKQVKAKTERAKEET), 437–485 (GKKE…EVKP), and 492–643 (VKKE…KAKE). Asn-617 is a glycosylation site (N-linked (GlcNAc...) asparagine). Positions 684–701 (PGESSGQPSSPGQKQQGQ) are enriched in low complexity.

Homooligomer of variable subunit number; disulfide-linked. Interacts with CASQ1 and RYR1 in skeletal muscle. Interacts with CASQ2. In terms of processing, phosphorylated by CaMK2. Post-translationally, N-glycosylated. As to expression, detected in heart (at protein level). Skeletal and cardiac muscle.

It is found in the sarcoplasmic reticulum membrane. Contributes to the regulation of lumenal Ca2+ release via the sarcoplasmic reticulum calcium release channels RYR1 and RYR2, a key step in triggering skeletal and heart muscle contraction. Required for normal organization of the triad junction, where T-tubules and the sarcoplasmic reticulum terminal cisternae are in close contact. Required for normal skeletal muscle strength. Plays a role in excitation-contraction coupling in the heart and in regulating the rate of heart beats. The polypeptide is Triadin (TRDN) (Canis lupus familiaris (Dog)).